Consider the following 461-residue polypeptide: D-arabinono-1,4-lactone oxidase (461 aa).

Residues 24 to 194 (FSAISLGLRC…VDITISVVPA (171 aa)) form the FAD-binding PCMH-type domain. A Pros-8alpha-FAD histidine modification is found at H61.

The protein belongs to the oxygen-dependent FAD-linked oxidoreductase family. FAD is required as a cofactor.

It is found in the mitochondrion membrane. It carries out the reaction D-arabinono-1,4-lactone + O2 = dehydro-D-arabinono-1,4-lactone + H2O2 + H(+). It functions in the pathway cofactor biosynthesis; D-erythroascorbate biosynthesis; dehydro-D-arabinono-1,4-lactone from D-arabinose: step 2/2. The sequence is that of D-arabinono-1,4-lactone oxidase (alo1) from Schizosaccharomyces pombe (strain 972 / ATCC 24843) (Fission yeast).